The chain runs to 251 residues: Elongation factor Ts (251 aa).

Positions Thr-82 to Val-85 are involved in Mg(2+) ion dislocation from EF-Tu. The interval Gln-215–Lys-251 is disordered. Residues Lys-219–Gln-229 show a composition bias toward low complexity. Basic and acidic residues predominate over residues Val-230–Ala-239.

Belongs to the EF-Ts family.

The protein resides in the cytoplasm. Functionally, associates with the EF-Tu.GDP complex and induces the exchange of GDP to GTP. It remains bound to the aminoacyl-tRNA.EF-Tu.GTP complex up to the GTP hydrolysis stage on the ribosome. The sequence is that of Elongation factor Ts from Microcystis aeruginosa (strain NIES-843 / IAM M-2473).